The chain runs to 21 residues: Major outer membrane protein (21 aa).

Disulfide bond interactions within and between MOMP molecules and other components form high molecular-weight oligomers.

Its subcellular location is the cell outer membrane. Functionally, structural rigidity of the outer membrane of elementary bodies and porin forming, permitting diffusion of solutes through the intracellular reticulate body membrane. The protein is Major outer membrane protein of Actinobacillus equuli.